The following is a 302-amino-acid chain: Beta-lactamase (302 aa).

A compositionally biased stretch (basic residues) spans 1-11 (MADRRRVHAWA). An N-terminal signal peptide occupies residues 1 to 29 (MADRRRVHAWARARPAAPEPAPPTPSAAA). Residues 1–43 (MADRRRVHAWARARPAAPEPAPPTPSAAAPSVAPGPAATPPDP) form a disordered region. Positions 26–36 (SAAAPSVAPGP) are enriched in low complexity. The active-site Acyl-ester intermediate is S85. S143 is a substrate binding site. Residue E179 is the Proton acceptor of the active site. Substrate is bound at residue 247-249 (KTG).

The protein belongs to the class-A beta-lactamase family.

Its subcellular location is the secreted. The enzyme catalyses a beta-lactam + H2O = a substituted beta-amino acid. Functionally, active on penicillins but not on cephalosporins. The chain is Beta-lactamase (bla) from Amycolatopsis lactamdurans (Nocardia lactamdurans).